The primary structure comprises 168 residues: MSRGFYIGRFQPYHNGHQSVLERIARTADEIVIGVGSAQVSHTVANPFTAGERVLMLTRSLEDLDCPFYVIPIEDVQRNALWVAHVRSMTPPFDTVYSSNPLVMQLFAEAGVDVQSPDMYERLTHSGTVIRQRMLGGEPWEHLVPPAVVDVIREIHGVERLQRIAGSD.

Belongs to the archaeal NMN adenylyltransferase family.

It is found in the cytoplasm. It carries out the reaction beta-nicotinamide D-ribonucleotide + ATP + H(+) = diphosphate + NAD(+). The protein operates within cofactor biosynthesis; NAD(+) biosynthesis; NAD(+) from nicotinamide D-ribonucleotide: step 1/1. The sequence is that of Nicotinamide-nucleotide adenylyltransferase from Methanoculleus marisnigri (strain ATCC 35101 / DSM 1498 / JR1).